The following is a 488-amino-acid chain: Ribulose bisphosphate carboxylase large chain (488 aa).

Positions 127 and 177 each coordinate substrate. The active-site Proton acceptor is lysine 179. Lysine 181 serves as a coordination point for substrate. Mg(2+) contacts are provided by lysine 205, aspartate 207, and glutamate 208. N6-carboxylysine is present on lysine 205. Histidine 297 serves as the catalytic Proton acceptor. Substrate is bound by residues arginine 298, histidine 330, and serine 382.

Belongs to the RuBisCO large chain family. Type I subfamily. Heterohexadecamer of 8 large chains and 8 small chains. Mg(2+) is required as a cofactor.

The protein resides in the plastid. Its subcellular location is the chloroplast. It catalyses the reaction 2 (2R)-3-phosphoglycerate + 2 H(+) = D-ribulose 1,5-bisphosphate + CO2 + H2O. The enzyme catalyses D-ribulose 1,5-bisphosphate + O2 = 2-phosphoglycolate + (2R)-3-phosphoglycerate + 2 H(+). Its function is as follows. RuBisCO catalyzes two reactions: the carboxylation of D-ribulose 1,5-bisphosphate, the primary event in carbon dioxide fixation, as well as the oxidative fragmentation of the pentose substrate in the photorespiration process. Both reactions occur simultaneously and in competition at the same active site. The polypeptide is Ribulose bisphosphate carboxylase large chain (Emiliania huxleyi (Coccolithophore)).